The chain runs to 155 residues: Putative methyl-CpG-binding domain protein 12 (155 aa).

The CW-type zinc-finger motif lies at 1–53 (MVQCTDCKKWRLIPSMQHYNIIKETQLQTPFVCGTTSGWTPNMSCNVPQDGTT). Residues 3–45 (QCTDCKKWRLIPSMQHYNIIKETQLQTPFVCGTTSGWTPNMSC) carry the MBD-associated domain (MAD) motif. Cys-4, Cys-7, Cys-33, and Cys-45 together coordinate Zn(2+). Positions 53-126 (TCDTWPSIPP…SQFSFQIPKP (74 aa)) constitute an MBD domain. A disordered region spans residues 130 to 155 (NYVKKRTRPVKRRKSSKDNNCEKGKK). Positions 133–144 (KKRTRPVKRRKS) are enriched in basic residues. The short motif at 140–147 (KRRKSSKD) is the Nuclear localization signal element. Over residues 145–155 (SKDNNCEKGKK) the composition is skewed to basic and acidic residues.

The protein resides in the nucleus. Its function is as follows. Probable transcriptional regulator. The chain is Putative methyl-CpG-binding domain protein 12 (MBD12) from Arabidopsis thaliana (Mouse-ear cress).